Consider the following 254-residue polypeptide: Translation initiation factor 2 subunit alpha (254 aa).

Positions 10-81 (GDLVVVKITE…ERKNVDLSLK (72 aa)) constitute an S1 motif domain.

Belongs to the eIF-2-alpha family. In terms of assembly, heterotrimer composed of an alpha, a beta and a gamma chain.

In terms of biological role, eIF-2 functions in the early steps of protein synthesis by forming a ternary complex with GTP and initiator tRNA. The protein is Translation initiation factor 2 subunit alpha of Thermoplasma volcanium (strain ATCC 51530 / DSM 4299 / JCM 9571 / NBRC 15438 / GSS1).